Consider the following 214-residue polypeptide: Germin-like protein 9-3 (214 aa).

The signal sequence occupies residues 1–23 (MASSILLLVVLAVVSAPVALVMA). N-linked (GlcNAc...) asparagine glycosylation is found at Asn42, Asn60, and Asn69. The 144-residue stretch at 59-202 (MNMSMPMPNA…SFKTDVPTIQ (144 aa)) folds into the Cupin type-1 domain. Mn(2+) contacts are provided by His104, His106, Glu111, and His150.

The protein belongs to the germin family. As to quaternary structure, oligomer (believed to be a pentamer but probably hexamer).

It localises to the secreted. The protein localises to the extracellular space. The protein resides in the apoplast. In terms of biological role, may play a role in plant defense. Probably has no oxalate oxidase activity even if the active site is conserved. The polypeptide is Germin-like protein 9-3 (Oryza sativa subsp. japonica (Rice)).